The primary structure comprises 85 residues: Large ribosomal subunit protein bL31B (85 aa).

It belongs to the bacterial ribosomal protein bL31 family. Type B subfamily. Part of the 50S ribosomal subunit.

The chain is Large ribosomal subunit protein bL31B from Staphylococcus epidermidis (strain ATCC 35984 / DSM 28319 / BCRC 17069 / CCUG 31568 / BM 3577 / RP62A).